We begin with the raw amino-acid sequence, 31 residues long: Cyclotide vibi-H (31 aa).

Positions 1–31 (GLLPCAESCVYIPCLTTVIGCSCKSKVCYKN) form a cross-link, cyclopeptide (Gly-Asn). Intrachain disulfides connect Cys5-Cys21, Cys9-Cys23, and Cys14-Cys28.

Post-translationally, this is a cyclic peptide.

Functionally, probably participates in a plant defense mechanism. Has cytotoxic activity, active against a human lymphoma cell line with an IC(50) of 1.6 uM. The polypeptide is Cyclotide vibi-H (Viola biflora (Yellow wood violet)).